We begin with the raw amino-acid sequence, 118 residues long: MPRVTRGFKARRRRNRVLKLAKGYRGARSRLFKTATEAVDRALCYAYRDRKQRKRDFRRLWITRINAGAKMNDINYSRFIGGLAKAGIELDRKVLANLAVLDAPAFTKLSVIAKEANA.

The protein belongs to the bacterial ribosomal protein bL20 family.

Functionally, binds directly to 23S ribosomal RNA and is necessary for the in vitro assembly process of the 50S ribosomal subunit. It is not involved in the protein synthesizing functions of that subunit. The protein is Large ribosomal subunit protein bL20 of Desulfotalea psychrophila (strain LSv54 / DSM 12343).